A 103-amino-acid chain; its full sequence is N(4)-acetylcytidine amidohydrolase (103 aa).

Residues 6 to 101 (ITFFQRFQDD…QTQFYVIEFK (96 aa)) enclose the ASCH domain. Lys21 serves as the catalytic Proton acceptor. Thr24 (nucleophile) is an active-site residue. Glu74 serves as the catalytic Proton donor.

This sequence belongs to the N(4)-acetylcytidine amidohydrolase family.

The catalysed reaction is N(4)-acetylcytidine + H2O = cytidine + acetate + H(+). It catalyses the reaction N(4)-acetyl-2'-deoxycytidine + H2O = 2'-deoxycytidine + acetate + H(+). It carries out the reaction N(4)-acetylcytosine + H2O = cytosine + acetate + H(+). Its function is as follows. Catalyzes the hydrolysis of N(4)-acetylcytidine (ac4C). This Escherichia coli O81 (strain ED1a) protein is N(4)-acetylcytidine amidohydrolase (yqfB).